The primary structure comprises 242 residues: Uridylate kinase (242 aa).

16-19 (KVSG) lines the ATP pocket. Gly58 contacts UMP. ATP-binding residues include Gly59 and Arg63. Residues Asp78 and 139 to 146 (TGNPFCTT) each bind UMP. 4 residues coordinate ATP: Thr166, Gln167, Tyr172, and Asp175.

It belongs to the UMP kinase family. Homohexamer.

The protein localises to the cytoplasm. It catalyses the reaction UMP + ATP = UDP + ADP. It participates in pyrimidine metabolism; CTP biosynthesis via de novo pathway; UDP from UMP (UMPK route): step 1/1. Its activity is regulated as follows. Inhibited by UTP. Functionally, catalyzes the reversible phosphorylation of UMP to UDP. This chain is Uridylate kinase, found in Rickettsia canadensis (strain McKiel).